The sequence spans 366 residues: Beta sliding clamp (366 aa).

This sequence belongs to the beta sliding clamp family. In terms of assembly, forms a ring-shaped head-to-tail homodimer around DNA which binds and tethers DNA polymerases and other proteins to the DNA. The DNA replisome complex has a single clamp-loading complex (3 tau and 1 each of delta, delta', psi and chi subunits) which binds 3 Pol III cores (1 core on the leading strand and 2 on the lagging strand) each with a beta sliding clamp dimer. Additional proteins in the replisome are other copies of gamma, psi and chi, Ssb, DNA helicase and RNA primase.

It is found in the cytoplasm. In terms of biological role, confers DNA tethering and processivity to DNA polymerases and other proteins. Acts as a clamp, forming a ring around DNA (a reaction catalyzed by the clamp-loading complex) which diffuses in an ATP-independent manner freely and bidirectionally along dsDNA. Initially characterized for its ability to contact the catalytic subunit of DNA polymerase III (Pol III), a complex, multichain enzyme responsible for most of the replicative synthesis in bacteria; Pol III exhibits 3'-5' exonuclease proofreading activity. The beta chain is required for initiation of replication as well as for processivity of DNA replication. This chain is Beta sliding clamp (dnaN), found in Haemophilus influenzae (strain ATCC 51907 / DSM 11121 / KW20 / Rd).